The primary structure comprises 118 residues: Beta-2-microglobulin (118 aa).

The first 20 residues, 1 to 20, serve as a signal peptide directing secretion; sequence MARVVALVLLGLLSLTGLEA. Residues 25–111 enclose the Ig-like C1-type domain; sequence PKVQVYSRHP…QHSTLKEPLI (87 aa). A disulfide bridge connects residues Cys-45 and Cys-99.

It belongs to the beta-2-microglobulin family. As to quaternary structure, heterodimer of an alpha chain and a beta chain. Beta-2-microglobulin is the beta-chain of major histocompatibility complex class I molecules.

Its subcellular location is the secreted. Its function is as follows. Component of the class I major histocompatibility complex (MHC). Involved in the presentation of peptide antigens to the immune system. This chain is Beta-2-microglobulin (B2M), found in Equus asinus (Donkey).